Here is a 475-residue protein sequence, read N- to C-terminus: Ribulose bisphosphate carboxylase large chain (475 aa).

A propeptide spanning residues 1–2 (MS) is cleaved from the precursor. An N-acetylproline modification is found at Pro-3. An N6,N6,N6-trimethyllysine modification is found at Lys-14. The substrate site is built by Asn-123 and Thr-173. The active-site Proton acceptor is Lys-175. Lys-177 contacts substrate. Mg(2+) contacts are provided by Lys-201, Asp-203, and Glu-204. Lys-201 bears the N6-carboxylysine mark. Residue His-294 is the Proton acceptor of the active site. 3 residues coordinate substrate: Arg-295, His-327, and Ser-379.

This sequence belongs to the RuBisCO large chain family. Type I subfamily. In terms of assembly, heterohexadecamer of 8 large chains and 8 small chains; disulfide-linked. The disulfide link is formed within the large subunit homodimers. The cofactor is Mg(2+). The disulfide bond which can form in the large chain dimeric partners within the hexadecamer appears to be associated with oxidative stress and protein turnover.

It is found in the plastid. Its subcellular location is the chloroplast. It catalyses the reaction 2 (2R)-3-phosphoglycerate + 2 H(+) = D-ribulose 1,5-bisphosphate + CO2 + H2O. It carries out the reaction D-ribulose 1,5-bisphosphate + O2 = 2-phosphoglycolate + (2R)-3-phosphoglycerate + 2 H(+). Functionally, ruBisCO catalyzes two reactions: the carboxylation of D-ribulose 1,5-bisphosphate, the primary event in carbon dioxide fixation, as well as the oxidative fragmentation of the pentose substrate in the photorespiration process. Both reactions occur simultaneously and in competition at the same active site. The sequence is that of Ribulose bisphosphate carboxylase large chain from Chlorokybus atmophyticus (Soil alga).